Reading from the N-terminus, the 202-residue chain is Holliday junction branch migration complex subunit RuvA (202 aa).

The interval 1–64 is domain I; that stretch reads MIDYVSGTLV…EDDESLYGFA (64 aa). The interval 65 to 143 is domain II; sequence TKAERTVFET…DLDVLEDTSP (79 aa). Positions 144–149 are flexible linker; that stretch reads LSGGSD. Residues 150–202 form a domain III region; the sequence is ARAEARADALEALTELGLSKADAERSIRQVLRDNAGIQSADELVRRALKADQE.

This sequence belongs to the RuvA family. Homotetramer. Forms an RuvA(8)-RuvB(12)-Holliday junction (HJ) complex. HJ DNA is sandwiched between 2 RuvA tetramers; dsDNA enters through RuvA and exits via RuvB. An RuvB hexamer assembles on each DNA strand where it exits the tetramer. Each RuvB hexamer is contacted by two RuvA subunits (via domain III) on 2 adjacent RuvB subunits; this complex drives branch migration. In the full resolvosome a probable DNA-RuvA(4)-RuvB(12)-RuvC(2) complex forms which resolves the HJ.

It is found in the cytoplasm. Functionally, the RuvA-RuvB-RuvC complex processes Holliday junction (HJ) DNA during genetic recombination and DNA repair, while the RuvA-RuvB complex plays an important role in the rescue of blocked DNA replication forks via replication fork reversal (RFR). RuvA specifically binds to HJ cruciform DNA, conferring on it an open structure. The RuvB hexamer acts as an ATP-dependent pump, pulling dsDNA into and through the RuvAB complex. HJ branch migration allows RuvC to scan DNA until it finds its consensus sequence, where it cleaves and resolves the cruciform DNA. The chain is Holliday junction branch migration complex subunit RuvA from Salinibacter ruber (strain DSM 13855 / M31).